Here is a 929-residue protein sequence, read N- to C-terminus: Facilitated trehalose transporter Tret1 (929 aa).

A disordered region spans residues 1–275; it reads MSGRDNRAAG…VGYQQQKATS (275 aa). The Cytoplasmic segment spans residues 1–462; that stretch reads MSGRDNRAAG…LEVYRPTTNP (462 aa). Residues 10 to 26 show a composition bias toward gly residues; the sequence is GAGGGSGGGGGGGGGGG. Positions 41-59 are enriched in basic and acidic residues; it reads KLKEKLTRAGEELGYHRVE. Residues 60-72 are compositionally biased toward polar residues; sequence SNLSASNTATSLD. Low complexity-rich tracts occupy residues 85 to 141, 168 to 178, and 237 to 254; these read AAPQ…QPLR, QEIQQQQLQQQ, and SNSN…VAAD. S320, S321, and S322 each carry phosphoserine. A disordered region spans residues 352–371; that stretch reads VLHGSSTDSDEEGEDAEHKR. Phosphoserine occurs at positions 392 and 394. Residues 398–420 form a disordered region; sequence FLSSRQNFQQQRSISTDSRKSRR. Polar residues predominate over residues 402–413; it reads RQNFQQQRSIST. Residues 463–483 form a helical membrane-spanning segment; that stretch reads IYIWTQVLAALSVSLGSLVVG. Topologically, residues 484 to 512 are extracellular; sequence FSSAYTSPALVSMTDRNLTSFDVSTEDAS. N500 is a glycosylation site (N-linked (GlcNAc...) asparagine). Residues 513–533 traverse the membrane as a helical segment; it reads WVGGIMPLAGLAGGIAGGPLI. Topologically, residues 534–541 are cytoplasmic; the sequence is EYLGRRNT. Residues 542-562 form a helical membrane-spanning segment; sequence ILATAVPFIISWLLIACAVNV. Over 563-569 the chain is Extracellular; that stretch reads PMVLSGR. A helical transmembrane segment spans residues 570-590; that stretch reads FLAGFCVGIASLSLPVYLGET. Residues 591–596 are Cytoplasmic-facing; sequence VQPEVR. A helical membrane pass occupies residues 597–617; the sequence is GTLGLLPTAFGNIGILLCFIA. Over 618 to 624 the chain is Extracellular; it reads GTYMDWS. A helical transmembrane segment spans residues 625 to 645; it reads MLAFLGGALPVPFLILMFLIP. The Cytoplasmic portion of the chain corresponds to 646–708; the sequence is ETPRWYVSRG…ELLKRSNLKP (63 aa). Residues 709-729 traverse the membrane as a helical segment; it reads LSISLGLMFFQQLSGINAVIF. Over 730 to 745 the chain is Extracellular; that stretch reads YTVQIFKDAGSTLDGN. The chain crosses the membrane as a helical span at residues 746 to 766; sequence VCTIIVGTVNFIATFIGILLI. Residues 767–772 lie on the Cytoplasmic side of the membrane; sequence DRAGRK. A helical membrane pass occupies residues 773–793; that stretch reads ILLYVSNIAMILTLFVLGGFF. The Extracellular segment spans residues 794–804; the sequence is YCKANGMDVSN. A helical membrane pass occupies residues 805 to 825; that stretch reads VGLLPLCCFVVYILGFSLGFG. At 826–839 the chain is on the cytoplasmic side; sequence PIPWLMMGEILPAK. The chain crosses the membrane as a helical span at residues 840-860; it reads IRGSAASVATAFNWTCTFVVT. The Extracellular segment spans residues 861–873; it reads KSFLDMIKLIGAH. The helical transmembrane segment at 874 to 894 threads the bilayer; that stretch reads GAFWLFGVICCIGMFFVIFCV. At 895–929 the chain is on the cytoplasmic side; the sequence is PETQGKTLEDIERKMMGRVRRMSSVANIKPLSFNM. A phosphoserine mark is found at S917 and S918.

It belongs to the major facilitator superfamily. Sugar transporter (TC 2.A.1.1) family. Trehalose transporter subfamily.

Its subcellular location is the cell membrane. Its function is as follows. Low-capacity facilitative transporter for trehalose. Does not transport maltose, sucrose or lactose. Mediates the bidirectional transfer of trehalose. Responsible for the transport of trehalose synthesized in the fat body and the incorporation of trehalose into other tissues that require a carbon source, thereby regulating trehalose levels in the hemolymph. This is Facilitated trehalose transporter Tret1 from Drosophila grimshawi (Hawaiian fruit fly).